Here is a 482-residue protein sequence, read N- to C-terminus: 3-isopropylmalate dehydratase large subunit (482 aa).

Residues 60–79 (ATPDHNVPTTRAERQGGLES) form a disordered region. [4Fe-4S] cluster-binding residues include C353, C414, and C417.

This sequence belongs to the aconitase/IPM isomerase family. LeuC type 1 subfamily. Heterodimer of LeuC and LeuD. The cofactor is [4Fe-4S] cluster.

The enzyme catalyses (2R,3S)-3-isopropylmalate = (2S)-2-isopropylmalate. Its pathway is amino-acid biosynthesis; L-leucine biosynthesis; L-leucine from 3-methyl-2-oxobutanoate: step 2/4. Its function is as follows. Catalyzes the isomerization between 2-isopropylmalate and 3-isopropylmalate, via the formation of 2-isopropylmaleate. This Xanthomonas euvesicatoria pv. vesicatoria (strain 85-10) (Xanthomonas campestris pv. vesicatoria) protein is 3-isopropylmalate dehydratase large subunit.